The chain runs to 484 residues: Aldehyde dehydrogenase family 3 member F1 (484 aa).

NAD(+) is bound at residue 192-197; that stretch reads GSPKIG. Glu214 (proton acceptor) is an active-site residue. The active-site Nucleophile is the Cys252.

This sequence belongs to the aldehyde dehydrogenase family. In terms of assembly, homotetramer. In terms of tissue distribution, constituively expressed at low levels.

The enzyme catalyses an aldehyde + NAD(+) + H2O = a carboxylate + NADH + 2 H(+). The sequence is that of Aldehyde dehydrogenase family 3 member F1 (ALDH3F1) from Arabidopsis thaliana (Mouse-ear cress).